A 294-amino-acid polypeptide reads, in one-letter code: Protoheme IX farnesyltransferase (294 aa).

9 helical membrane-spanning segments follow: residues 22–42, 46–66, 89–109, 116–136, 143–163, 170–190, 212–232, 234–254, and 272–292; these read VTQL…PELP, IVVA…AINC, ITVP…MWVL, LTMW…TIIL, NIVI…AAVA, AWIL…ALAL, FTQF…MLPF, VGMS…IFVW, and FAYS…DHYL.

It belongs to the UbiA prenyltransferase family. Protoheme IX farnesyltransferase subfamily.

It is found in the cell inner membrane. It catalyses the reaction heme b + (2E,6E)-farnesyl diphosphate + H2O = Fe(II)-heme o + diphosphate. The protein operates within porphyrin-containing compound metabolism; heme O biosynthesis; heme O from protoheme: step 1/1. Converts heme B (protoheme IX) to heme O by substitution of the vinyl group on carbon 2 of heme B porphyrin ring with a hydroxyethyl farnesyl side group. This is Protoheme IX farnesyltransferase from Janthinobacterium sp. (strain Marseille) (Minibacterium massiliensis).